Consider the following 207-residue polypeptide: dTTP/UTP pyrophosphatase (207 aa).

Asp-87 (proton acceptor) is an active-site residue.

This sequence belongs to the Maf family. YhdE subfamily. Requires a divalent metal cation as cofactor.

The protein localises to the cytoplasm. The enzyme catalyses dTTP + H2O = dTMP + diphosphate + H(+). It carries out the reaction UTP + H2O = UMP + diphosphate + H(+). Its function is as follows. Nucleoside triphosphate pyrophosphatase that hydrolyzes dTTP and UTP. May have a dual role in cell division arrest and in preventing the incorporation of modified nucleotides into cellular nucleic acids. The chain is dTTP/UTP pyrophosphatase from Bordetella pertussis (strain Tohama I / ATCC BAA-589 / NCTC 13251).